The following is a 118-amino-acid chain: uncharacterized protein (118 aa).

This is an uncharacterized protein from Methanocaldococcus jannaschii (strain ATCC 43067 / DSM 2661 / JAL-1 / JCM 10045 / NBRC 100440) (Methanococcus jannaschii).